A 724-amino-acid chain; its full sequence is NAD(+) hydrolase SARM1 (724 aa).

The transit peptide at 1–27 (MVLTLLLSAYKLCRFFAMSGPRPGAER) directs the protein to the mitochondrion. The ARM 1 repeat unit spans residues 60 to 100 (EVQDALERALPELQQALSALKQAGGARAVGAGLAEVFQLVE). Residues tryptophan 103, arginine 110, 149–157 (EQILVAENR), and 190–193 (HMFK) contribute to the NAD(+) site. 7 ARM repeats span residues 114–153 (QGLC…QILV), 155–193 (ENRD…HMFK), 196–235 (EETC…NCAL), 237–280 (GGQA…LATN), 281–314 (KEVE…CLVD), 315–354 (ASDT…AEAA), and 359–402 (QGKT…EEVP). SAM domains are found at residues 412–476 (WKEA…LKTF) and 486–548 (NLAD…MLHS). Phosphoserine is present on residues serine 548 and serine 558. The TIR domain maps to 560-703 (DTPDVFISYR…KIIRFLQGRS (144 aa)). NAD(+) contacts are provided by residues 569 to 570 (RR) and glutamate 599. The active site involves glutamate 642. Residues 704–724 (SRDSSAGSDTSLEGAAPMGPT) form a disordered region.

It belongs to the SARM1 family. Homooctamer; forms an octameric ring via SAM domains. Interacts with TICAM1/TRIF and thereby interferes with TICAM1/TRIF function. Interacts with MAPK10/JNK3 and SDC2 (via cytoplasmic domain). In terms of processing, phosphorylation at Ser-548 by JNK kinases (MAPK8, MAPK9 and /or MAPK10) enhance the NAD(+) hydrolase (NADase) activity. Phosphorylation at Ser-548 and subsequent activation takes place in response to oxidative stress conditions and inhibits mitochondrial respiration. As to expression, predominantly expressed in brain, kidney and liver. Expressed at lower level in placenta.

The protein resides in the cytoplasm. Its subcellular location is the cell projection. It localises to the axon. It is found in the dendrite. The protein localises to the synapse. The protein resides in the mitochondrion. The enzyme catalyses NAD(+) + H2O = ADP-D-ribose + nicotinamide + H(+). It carries out the reaction NAD(+) = cyclic ADP-beta-D-ribose + nicotinamide + H(+). It catalyses the reaction NADP(+) + H2O = ADP-D-ribose 2'-phosphate + nicotinamide + H(+). With respect to regulation, autoinhibited: in the inactive state, the enzymatic TIR domain is held apart by the autoinhibiting ARM repeats. NAD(+)-binding to ARM repeats maintains an inactive state by promoting interaction between ARM repeats and the TIR domain, thereby facilitating inhibition of the enzymatic TIR domain. Following activation, possibly by nicotinamide mononucleotide (NMN), auto-inhibitory interactions are released, allowing self-association of the TIR domains and subsequent activation of the NAD(+) hydrolase (NADase) activity. Self-association of TIR domains is facilitated by the octamer of SAM domains. NAD(+) hydrolase activity is inhibited by nicotinamide. Specifically inhibited by berberine chloride and zinc chloride. NAD(+) hydrolase, which plays a key role in axonal degeneration following injury by regulating NAD(+) metabolism. Acts as a negative regulator of MYD88- and TRIF-dependent toll-like receptor signaling pathway by promoting Wallerian degeneration, an injury-induced form of programmed subcellular death which involves degeneration of an axon distal to the injury site. Wallerian degeneration is triggered by NAD(+) depletion: in response to injury, SARM1 is activated and catalyzes cleavage of NAD(+) into ADP-D-ribose (ADPR), cyclic ADPR (cADPR) and nicotinamide; NAD(+) cleavage promoting cytoskeletal degradation and axon destruction. Also able to hydrolyze NADP(+), but not other NAD(+)-related molecules. Can activate neuronal cell death in response to stress. Regulates dendritic arborization through the MAPK4-JNK pathway. Involved in innate immune response: inhibits both TICAM1/TRIF- and MYD88-dependent activation of JUN/AP-1, TRIF-dependent activation of NF-kappa-B and IRF3, and the phosphorylation of MAPK14/p38. The chain is NAD(+) hydrolase SARM1 from Homo sapiens (Human).